A 138-amino-acid chain; its full sequence is Acidic phospholipase A2 Cvv-E6a (138 aa).

The N-terminal stretch at 1–16 (MRTLWIVAVLLLGVEG) is a signal peptide. Cystine bridges form between C42–C131, C44–C60, C59–C111, C65–C138, C66–C104, C73–C97, and C91–C102. Ca(2+) contacts are provided by Y43, G45, and G47. Residue H63 is part of the active site. Ca(2+) is bound at residue D64. Residue D105 is part of the active site.

It belongs to the phospholipase A2 family. Group II subfamily. D49 sub-subfamily. Ca(2+) serves as cofactor. As to expression, expressed by the venom gland.

It localises to the secreted. The catalysed reaction is a 1,2-diacyl-sn-glycero-3-phosphocholine + H2O = a 1-acyl-sn-glycero-3-phosphocholine + a fatty acid + H(+). In terms of biological role, snake venom phospholipase A2 (PLA2) that significantly inhibits ADP-induced platelet aggregation in platelet-rich plasma of human, rabbit and guinea pig. PLA2 catalyzes the calcium-dependent hydrolysis of the 2-acyl groups in 3-sn-phosphoglycerides. The polypeptide is Acidic phospholipase A2 Cvv-E6a (Crotalus viridis viridis (Prairie rattlesnake)).